The sequence spans 597 residues: Siderophore iron transporter 2 (597 aa).

Position 46 is a phosphoserine (S46). Transmembrane regions (helical) follow at residues 65 to 85 (IIVA…EQQT), 97 to 117 (FSAH…LAVV), 131 to 151 (SESL…LAFS), 159 to 179 (VAYI…QLII), 190 to 210 (ILSA…PVLA), 225 to 245 (YGIW…SLFL), 281 to 301 (LDGL…LPFS), 312 to 332 (TILT…LCFY), 357 to 377 (VLIF…TSFL), 390 to 410 (LTLN…GFLM), 419 to 439 (LLMI…LFGI), 448 to 468 (LVLV…SAQI), 485 to 505 (LYLT…GGVW), and 558 to 578 (KDLF…LVII).

The protein belongs to the major facilitator superfamily.

The protein localises to the membrane. Functionally, involved in the transport of siderophore iron and so has a role in iron homeostasis. The chain is Siderophore iron transporter 2 (str2) from Schizosaccharomyces pombe (strain 972 / ATCC 24843) (Fission yeast).